The following is a 30-amino-acid chain: Platelet factor 4 (30 aa).

This sequence belongs to the intercrine alpha (chemokine CxC) family. As to quaternary structure, homotetramer. Interacts with TNFAIP6 (via Link domain). Interacts with CCR1. Interacts with CXCR3. In terms of processing, binds non-covalently to a proteoglycan molecule.

Its subcellular location is the secreted. Its function is as follows. Chemokine released during platelet aggregation that plays a role in different biological processes including hematopoiesis, cell proliferation, differentiation, and activation. Acts via different functional receptors including CCR1, CXCR3A or CXCR3B. Upon interaction with CXCR3A receptor, induces activated T-lymphocytes migration mediated via downstream Ras/extracellular signal-regulated kinase (ERK) signaling. Neutralizes the anticoagulant effect of heparin by binding more strongly to heparin than to the chondroitin-4-sulfate chains of the carrier molecule. Plays a role in the inhibition of hematopoiesis and in the maintenance of hematopoietic stem cell (HSC) quiescence. Chemotactic for neutrophils and monocytes via CCR1. Inhibits endothelial cell proliferation. In cooperation with toll-like receptor 8/TLR8, induces chromatin remodeling and activates inflammatory gene expression via the TBK1-IRF5 axis. In addition, induces myofibroblast differentiation and collagen synthesis in different precursor cells, including endothelial cells, by stimulating endothelial-to-mesenchymal transition. The protein is Platelet factor 4 (PF4) of Oryctolagus cuniculus (Rabbit).